Here is a 350-residue protein sequence, read N- to C-terminus: Protein OPG097 (350 aa).

Residues 1–10 (MNTRTDVTND) are compositionally biased toward polar residues. Positions 1-61 (MNTRTDVTND…QPPKQDNKCR (61 aa)) are disordered. Residues 11–43 (NIDKNPTKRGDRNIPGRNERFNDQNRFNNDRPR) are compositionally biased toward basic and acidic residues.

The protein belongs to the orthopoxvirus OPG097 family.

The protein resides in the virion. Its subcellular location is the host cytoplasm. Functionally, might be required to be present in the virion for transcription of early genes after primo infection. The protein is Protein OPG097 (OPG097) of Homo sapiens (Human).